An 89-amino-acid polypeptide reads, in one-letter code: Neuropeptide S (89 aa).

An N-terminal signal peptide occupies residues 1 to 23 (MIGSLKLSFVLALSLSVMHVLWC). A propeptide spanning residues 24–69 (YPVLSSKVPGKPDYFLILLSSCPARLEGSDRLAFLKPILEKTSMKR) is cleaved from the precursor.

Its subcellular location is the secreted. Its function is as follows. May play an important anorexigenic role. Modulates arousal and anxiety as well as increases locomotor activity. Binds to its receptor NPSR1 with nanomolar affinity to increase intracellular calcium concentrations. The polypeptide is Neuropeptide S (Nps) (Mus musculus (Mouse)).